The primary structure comprises 332 residues: Putative potassium channel regulatory protein sup-10 (332 aa).

Positions 1–18 (MRYAVFIFLIVLIDLIYC) are cleaved as a signal peptide. Residues 19–301 (WNSKRSFFIP…EISERNKRPA (283 aa)) lie on the Extracellular side of the membrane. N-linked (GlcNAc...) asparagine glycans are attached at residues N61, N107, and N166. The helical transmembrane segment at 302–322 (FVLVGLTGGIAVIILAFSIFW) threads the bilayer. Residues 323–332 (GLNGSGFNKD) lie on the Cytoplasmic side of the membrane.

May form a complex with sup-9 and unc-93 where sup-10 and unc-93 act as regulatory subunits of the two pore potassium channel sup-9. Sup-10 may regulate sup-9 via sup-18. Low levels in body-wall muscles, eight vulval muscles, intestinal muscles and anal depressor muscle.

It localises to the membrane. May contribute to coordination of muscle contraction as regulatory subunit of a nonessential potassium channel complex. The protein is Putative potassium channel regulatory protein sup-10 of Caenorhabditis elegans.